The sequence spans 207 residues: MARCKS-related protein 1-B (207 aa).

Low complexity-rich tracts occupy residues 1-25 (MGSQASKGGVAVEGKAAAADPAAVK) and 63-77 (AGAGDAIEPAPAAEG). Positions 1 to 207 (MGSQASKGGV…STPAPSEQKE (207 aa)) are disordered. A lipid anchor (N-myristoyl glycine) is attached at glycine 2. Over residues 78-90 (EAAKPEGEATKET) the composition is skewed to basic and acidic residues. An effector domain involved in lipid-binding region spans residues 93–116 (KKKKKFSLKNSFKFKGISLKKSKK). Residues 100-109 (LKNSFKFKGI) are compositionally biased toward low complexity. 2 stretches are compositionally biased toward basic and acidic residues: residues 131–154 (TEEKPEENGAATEEKKEEEAKAEE) and 163–182 (PKAEEPAAKAEEPAAAKEEA). Residues 195–207 (ETNSTPAPSEQKE) show a composition bias toward polar residues.

It belongs to the MARCKS family. Strongly expressed in brain and eye. Also detected at lower levels in muscle.

The protein localises to the cytoplasm. It is found in the cytoskeleton. It localises to the cell membrane. In terms of biological role, involved in the control of cell movement by regulating actin cytoskeleton homeostasis and filopodium and lamellipodium formation. This is MARCKS-related protein 1-B from Danio rerio (Zebrafish).